The primary structure comprises 477 residues: Ribulose bisphosphate carboxylase large chain (477 aa).

The propeptide occupies 1-2 (MS). N-acetylproline is present on P3. Residues N123 and T173 each contribute to the substrate site. The Proton acceptor role is filled by K175. Residue K177 participates in substrate binding. Mg(2+) is bound by residues K201, D203, and E204. At K201 the chain carries N6-carboxylysine. H294 serves as the catalytic Proton acceptor. Substrate-binding residues include R295, H327, and S379.

The protein belongs to the RuBisCO large chain family. Type I subfamily. Heterohexadecamer of 8 large chains and 8 small chains; disulfide-linked. The disulfide link is formed within the large subunit homodimers. Requires Mg(2+) as cofactor. Post-translationally, the disulfide bond which can form in the large chain dimeric partners within the hexadecamer appears to be associated with oxidative stress and protein turnover.

The protein resides in the plastid. It localises to the chloroplast. It carries out the reaction 2 (2R)-3-phosphoglycerate + 2 H(+) = D-ribulose 1,5-bisphosphate + CO2 + H2O. The catalysed reaction is D-ribulose 1,5-bisphosphate + O2 = 2-phosphoglycolate + (2R)-3-phosphoglycerate + 2 H(+). In terms of biological role, ruBisCO catalyzes two reactions: the carboxylation of D-ribulose 1,5-bisphosphate, the primary event in carbon dioxide fixation, as well as the oxidative fragmentation of the pentose substrate in the photorespiration process. Both reactions occur simultaneously and in competition at the same active site. This chain is Ribulose bisphosphate carboxylase large chain, found in Lolium perenne (Perennial ryegrass).